Here is a 273-residue protein sequence, read N- to C-terminus: Dermonecrotic toxin LapSicTox-alphaIB1b3 (273 aa).

H5 is an active-site residue. E25 and D27 together coordinate Mg(2+). Residue H41 is the Nucleophile of the active site. 2 disulfides stabilise this stretch: C45/C51 and C47/C190. D85 provides a ligand contact to Mg(2+). N-linked (GlcNAc...) asparagine glycosylation occurs at N250.

This sequence belongs to the arthropod phospholipase D family. Class II subfamily. The cofactor is Mg(2+). Expressed by the venom gland.

The protein localises to the secreted. It catalyses the reaction an N-(acyl)-sphingosylphosphocholine = an N-(acyl)-sphingosyl-1,3-cyclic phosphate + choline. It carries out the reaction an N-(acyl)-sphingosylphosphoethanolamine = an N-(acyl)-sphingosyl-1,3-cyclic phosphate + ethanolamine. The catalysed reaction is a 1-acyl-sn-glycero-3-phosphocholine = a 1-acyl-sn-glycero-2,3-cyclic phosphate + choline. The enzyme catalyses a 1-acyl-sn-glycero-3-phosphoethanolamine = a 1-acyl-sn-glycero-2,3-cyclic phosphate + ethanolamine. Its function is as follows. Dermonecrotic toxins cleave the phosphodiester linkage between the phosphate and headgroup of certain phospholipids (sphingolipid and lysolipid substrates), forming an alcohol (often choline) and a cyclic phosphate. This toxin acts on sphingomyelin (SM). It may also act on ceramide phosphoethanolamine (CPE), lysophosphatidylcholine (LPC) and lysophosphatidylethanolamine (LPE), but not on lysophosphatidylserine (LPS), and lysophosphatidylglycerol (LPG). It acts by transphosphatidylation, releasing exclusively cyclic phosphate products as second products. Induces dermonecrosis, hemolysis, increased vascular permeability, edema, inflammatory response, and platelet aggregation. This Loxosceles apachea (Apache recluse spider) protein is Dermonecrotic toxin LapSicTox-alphaIB1b3.